A 201-amino-acid polypeptide reads, in one-letter code: Recombination protein RecR (201 aa).

The C4-type zinc-finger motif lies at C60–C75. Positions S83–P178 constitute a Toprim domain.

The protein belongs to the RecR family.

May play a role in DNA repair. It seems to be involved in an RecBC-independent recombinational process of DNA repair. It may act with RecF and RecO. This is Recombination protein RecR from Azorhizobium caulinodans (strain ATCC 43989 / DSM 5975 / JCM 20966 / LMG 6465 / NBRC 14845 / NCIMB 13405 / ORS 571).